Reading from the N-terminus, the 635-residue chain is Phosphomethylpyrimidine synthase (635 aa).

Residues 1–14 (MNATVSSAVQSSLP) are compositionally biased toward polar residues. The segment at 1–41 (MNATVSSAVQSSLPFSGKTAQVDEGTVKPLPRSQKTYLSGS) is disordered. Substrate is bound by residues Asn-240, Met-269, Tyr-298, His-334, 354 to 356 (SRG), 395 to 398 (DGLR), and Glu-434. Position 438 (His-438) interacts with Zn(2+). A substrate-binding site is contributed by Tyr-461. His-502 contributes to the Zn(2+) binding site. Cys-582, Cys-585, and Cys-590 together coordinate [4Fe-4S] cluster.

Belongs to the ThiC family. As to quaternary structure, homodimer. [4Fe-4S] cluster is required as a cofactor.

It carries out the reaction 5-amino-1-(5-phospho-beta-D-ribosyl)imidazole + S-adenosyl-L-methionine = 4-amino-2-methyl-5-(phosphooxymethyl)pyrimidine + CO + 5'-deoxyadenosine + formate + L-methionine + 3 H(+). It participates in cofactor biosynthesis; thiamine diphosphate biosynthesis. Catalyzes the synthesis of the hydroxymethylpyrimidine phosphate (HMP-P) moiety of thiamine from aminoimidazole ribotide (AIR) in a radical S-adenosyl-L-methionine (SAM)-dependent reaction. This is Phosphomethylpyrimidine synthase from Nitrosospira multiformis (strain ATCC 25196 / NCIMB 11849 / C 71).